Reading from the N-terminus, the 447-residue chain is Tubulin beta chain (447 aa).

8 residues coordinate GTP: Gln11, Glu69, Ser138, Gly142, Thr143, Gly144, Asn204, and Asn226. Position 69 (Glu69) interacts with Mg(2+). Residues 424–447 are disordered; sequence QYQEASVSDAEEEYDEEAPLEGEE. Over residues 432–447 the composition is skewed to acidic residues; sequence DAEEEYDEEAPLEGEE.

Belongs to the tubulin family. Dimer of alpha and beta chains. A typical microtubule is a hollow water-filled tube with an outer diameter of 25 nm and an inner diameter of 15 nM. Alpha-beta heterodimers associate head-to-tail to form protofilaments running lengthwise along the microtubule wall with the beta-tubulin subunit facing the microtubule plus end conferring a structural polarity. Microtubules usually have 13 protofilaments but different protofilament numbers can be found in some organisms and specialized cells. It depends on Mg(2+) as a cofactor.

It is found in the cytoplasm. Its subcellular location is the cytoskeleton. Functionally, tubulin is the major constituent of microtubules, a cylinder consisting of laterally associated linear protofilaments composed of alpha- and beta-tubulin heterodimers. Microtubules grow by the addition of GTP-tubulin dimers to the microtubule end, where a stabilizing cap forms. Below the cap, tubulin dimers are in GDP-bound state, owing to GTPase activity of alpha-tubulin. This Zymoseptoria tritici (Speckled leaf blotch fungus) protein is Tubulin beta chain (TUB1).